A 434-amino-acid polypeptide reads, in one-letter code: GTPase Obg (434 aa).

Residues 1 to 158 enclose the Obg domain; the sequence is MFLDTAKIKV…RELQLELKIL (158 aa). The OBG-type G domain maps to 159-336; that stretch reads ADVGLVGFPS…LLDATAELLD (178 aa). Residues 165-172, 190-194, 212-215, 282-285, and 317-319 contribute to the GTP site; these read GFPSVGKS, FTTIV, DLPG, NKMD, and SGL. The Mg(2+) site is built by S172 and T192. The 79-residue stretch at 356–434 folds into the OCT domain; the sequence is GFDEEEKAFE…IGKFEFEFVD (79 aa).

Belongs to the TRAFAC class OBG-HflX-like GTPase superfamily. OBG GTPase family. As to quaternary structure, monomer. It depends on Mg(2+) as a cofactor.

Its subcellular location is the cytoplasm. Its function is as follows. An essential GTPase which binds GTP, GDP and possibly (p)ppGpp with moderate affinity, with high nucleotide exchange rates and a fairly low GTP hydrolysis rate. Plays a role in control of the cell cycle, stress response, ribosome biogenesis and in those bacteria that undergo differentiation, in morphogenesis control. The protein is GTPase Obg of Streptococcus pneumoniae serotype 19F (strain G54).